Here is a 336-residue protein sequence, read N- to C-terminus: Holliday junction branch migration complex subunit RuvB (336 aa).

The large ATPase domain (RuvB-L) stretch occupies residues 4 to 184 (ADRLVSADSS…FGIVQRLEFY (181 aa)). Residues Ile23, Arg24, Gly65, Lys68, Thr69, Thr70, 131-133 (EDY), Arg174, Tyr184, and Arg221 contribute to the ATP site. Mg(2+) is bound at residue Thr69. The segment at 185-255 (QIPDLQHIVS…IAAQALDMLN (71 aa)) is small ATPAse domain (RuvB-S). The interval 258–336 (AEGFDYMDRK…HFGITPPEMP (79 aa)) is head domain (RuvB-H). DNA is bound by residues Arg294, Arg313, and Arg318.

This sequence belongs to the RuvB family. Homohexamer. Forms an RuvA(8)-RuvB(12)-Holliday junction (HJ) complex. HJ DNA is sandwiched between 2 RuvA tetramers; dsDNA enters through RuvA and exits via RuvB. An RuvB hexamer assembles on each DNA strand where it exits the tetramer. Each RuvB hexamer is contacted by two RuvA subunits (via domain III) on 2 adjacent RuvB subunits; this complex drives branch migration. In the full resolvosome a probable DNA-RuvA(4)-RuvB(12)-RuvC(2) complex forms which resolves the HJ.

The protein resides in the cytoplasm. It catalyses the reaction ATP + H2O = ADP + phosphate + H(+). In terms of biological role, the RuvA-RuvB-RuvC complex processes Holliday junction (HJ) DNA during genetic recombination and DNA repair, while the RuvA-RuvB complex plays an important role in the rescue of blocked DNA replication forks via replication fork reversal (RFR). RuvA specifically binds to HJ cruciform DNA, conferring on it an open structure. The RuvB hexamer acts as an ATP-dependent pump, pulling dsDNA into and through the RuvAB complex. RuvB forms 2 homohexamers on either side of HJ DNA bound by 1 or 2 RuvA tetramers; 4 subunits per hexamer contact DNA at a time. Coordinated motions by a converter formed by DNA-disengaged RuvB subunits stimulates ATP hydrolysis and nucleotide exchange. Immobilization of the converter enables RuvB to convert the ATP-contained energy into a lever motion, pulling 2 nucleotides of DNA out of the RuvA tetramer per ATP hydrolyzed, thus driving DNA branch migration. The RuvB motors rotate together with the DNA substrate, which together with the progressing nucleotide cycle form the mechanistic basis for DNA recombination by continuous HJ branch migration. Branch migration allows RuvC to scan DNA until it finds its consensus sequence, where it cleaves and resolves cruciform DNA. This is Holliday junction branch migration complex subunit RuvB from Klebsiella pneumoniae subsp. pneumoniae (strain ATCC 700721 / MGH 78578).